A 428-amino-acid chain; its full sequence is Gamma-glutamyl phosphate reductase (428 aa).

The protein belongs to the gamma-glutamyl phosphate reductase family.

It localises to the cytoplasm. It catalyses the reaction L-glutamate 5-semialdehyde + phosphate + NADP(+) = L-glutamyl 5-phosphate + NADPH + H(+). It participates in amino-acid biosynthesis; L-proline biosynthesis; L-glutamate 5-semialdehyde from L-glutamate: step 2/2. In terms of biological role, catalyzes the NADPH-dependent reduction of L-glutamate 5-phosphate into L-glutamate 5-semialdehyde and phosphate. The product spontaneously undergoes cyclization to form 1-pyrroline-5-carboxylate. This is Gamma-glutamyl phosphate reductase from Treponema pallidum (strain Nichols).